We begin with the raw amino-acid sequence, 675 residues long: UvrABC system protein B (675 aa).

The region spanning 30–417 (SGIEQGNRNQ…SDQIVEQVVR (388 aa)) is the Helicase ATP-binding domain. 43 to 50 (GVTGSGKT) provides a ligand contact to ATP. A Beta-hairpin motif is present at residues 96-119 (YYDYYQPEAYVPSSDTFIEKDAAI). In terms of domain architecture, Helicase C-terminal spans 434–601 (QVDDVLSEIN…AVRQKVKEID (168 aa)). In terms of domain architecture, UVR spans 637-672 (AKHMSKLEKEMLKASKELQFEQAARLRDEILRLKAQ).

It belongs to the UvrB family. As to quaternary structure, forms a heterotetramer with UvrA during the search for lesions. Interacts with UvrC in an incision complex.

The protein localises to the cytoplasm. In terms of biological role, the UvrABC repair system catalyzes the recognition and processing of DNA lesions. A damage recognition complex composed of 2 UvrA and 2 UvrB subunits scans DNA for abnormalities. Upon binding of the UvrA(2)B(2) complex to a putative damaged site, the DNA wraps around one UvrB monomer. DNA wrap is dependent on ATP binding by UvrB and probably causes local melting of the DNA helix, facilitating insertion of UvrB beta-hairpin between the DNA strands. Then UvrB probes one DNA strand for the presence of a lesion. If a lesion is found the UvrA subunits dissociate and the UvrB-DNA preincision complex is formed. This complex is subsequently bound by UvrC and the second UvrB is released. If no lesion is found, the DNA wraps around the other UvrB subunit that will check the other stand for damage. The sequence is that of UvrABC system protein B from Acinetobacter baylyi (strain ATCC 33305 / BD413 / ADP1).